Reading from the N-terminus, the 292-residue chain is Light-independent protochlorophyllide reductase iron-sulfur ATP-binding protein (292 aa).

ATP-binding positions include 10–15 (GIGKST) and Lys-39. Ser-14 is a binding site for Mg(2+). Residue Cys-95 participates in [4Fe-4S] cluster binding. ATP is bound at residue 182–183 (NR).

Belongs to the NifH/BchL/ChlL family. As to quaternary structure, homodimer. Protochlorophyllide reductase is composed of three subunits; ChlL, ChlN and ChlB. It depends on [4Fe-4S] cluster as a cofactor.

The protein resides in the plastid. Its subcellular location is the chloroplast. The catalysed reaction is chlorophyllide a + oxidized 2[4Fe-4S]-[ferredoxin] + 2 ADP + 2 phosphate = protochlorophyllide a + reduced 2[4Fe-4S]-[ferredoxin] + 2 ATP + 2 H2O. The protein operates within porphyrin-containing compound metabolism; chlorophyll biosynthesis (light-independent). Its function is as follows. Component of the dark-operative protochlorophyllide reductase (DPOR) that uses Mg-ATP and reduced ferredoxin to reduce ring D of protochlorophyllide (Pchlide) to form chlorophyllide a (Chlide). This reaction is light-independent. The L component serves as a unique electron donor to the NB-component of the complex, and binds Mg-ATP. In Huperzia lucidula (Shining clubmoss), this protein is Light-independent protochlorophyllide reductase iron-sulfur ATP-binding protein.